The sequence spans 378 residues: Erythronate-4-phosphate dehydrogenase (378 aa).

Residues serine 45 and threonine 66 each coordinate substrate. Residues aspartate 146 and threonine 175 each coordinate NAD(+). Arginine 208 is an active-site residue. Aspartate 232 provides a ligand contact to NAD(+). Residue glutamate 237 is part of the active site. The active-site Proton donor is the histidine 254. Glycine 257 is a binding site for NAD(+). Tyrosine 258 lines the substrate pocket.

The protein belongs to the D-isomer specific 2-hydroxyacid dehydrogenase family. PdxB subfamily. In terms of assembly, homodimer.

It localises to the cytoplasm. The enzyme catalyses 4-phospho-D-erythronate + NAD(+) = (R)-3-hydroxy-2-oxo-4-phosphooxybutanoate + NADH + H(+). It participates in cofactor biosynthesis; pyridoxine 5'-phosphate biosynthesis; pyridoxine 5'-phosphate from D-erythrose 4-phosphate: step 2/5. Catalyzes the oxidation of erythronate-4-phosphate to 3-hydroxy-2-oxo-4-phosphonooxybutanoate. This chain is Erythronate-4-phosphate dehydrogenase, found in Shigella dysenteriae serotype 1 (strain Sd197).